We begin with the raw amino-acid sequence, 230 residues long: Cytochrome b6-f complex iron-sulfur subunit, chloroplastic (230 aa).

The N-terminal 51 residues, 1-51 (MASFTLSSATPSQLCSSKNGMFAPSLALAKAGRVNVLISKERIRGMKLTCQ), are a transit peptide targeting the chloroplast. The helical transmembrane segment at 73–93 (LLGALSLPTGYMLLPYASFFV) threads the bilayer. In terms of domain architecture, Rieske spans 116 to 212 (AAEWLKTHAP…CDVDDGKVVF (97 aa)). [2Fe-2S] cluster contacts are provided by C158, H160, C176, and H179. C163 and C178 are joined by a disulfide.

Belongs to the Rieske iron-sulfur protein family. The 4 large subunits of the cytochrome b6-f complex are cytochrome b6, subunit IV (17 kDa polypeptide, petD), cytochrome f and the Rieske protein, while the 4 small subunits are petG, petL, petM and petN. The complex functions as a dimer. Requires [2Fe-2S] cluster as cofactor.

The protein resides in the plastid. It is found in the chloroplast thylakoid membrane. The catalysed reaction is 2 oxidized [plastocyanin] + a plastoquinol + 2 H(+)(in) = 2 reduced [plastocyanin] + a plastoquinone + 4 H(+)(out). Its function is as follows. Component of the cytochrome b6-f complex, which mediates electron transfer between photosystem II (PSII) and photosystem I (PSI), cyclic electron flow around PSI, and state transitions. This chain is Cytochrome b6-f complex iron-sulfur subunit, chloroplastic (petC), found in Spinacia oleracea (Spinach).